We begin with the raw amino-acid sequence, 121 residues long: Structural protein p14.5 (121 aa).

Disordered stretches follow at residues 1–24 (MADF…IGSL) and 84–121 (TSLV…HKSK). Ala2 carries the N-acetylalanine; by host modification. Basic residues predominate over residues 104 to 121 (KPKKKKHLFPKLSSHKSK).

Belongs to the asfivirus structural protein p14.5 family. In terms of assembly, interacts with the major capsid protein. Interacts with host IRF3; this interaction interferes with the recruitment of IRF3 to TBK1. Acetylated.

The protein resides in the virion. In terms of biological role, structural protein required for transport of intracellular particles from the assembly sites to the plasma membrane. Binds to both ssDNA and dsDNA. Suppressed the activation of the cGAS/STING pathway by interfering with the recruitment of IRF3 to TBK1, which in turn suppresses IRF3 phosphorylation, decreasing interferon production. The chain is Structural protein p14.5 from Ornithodoros (relapsing fever ticks).